Here is a 266-residue protein sequence, read N- to C-terminus: Putative carbamate hydrolase RutD (266 aa).

An AB hydrolase-1 domain is found at 14-238 (PVVVLSAGLG…RVEMPWGGHA (225 aa)).

Belongs to the AB hydrolase superfamily. Hydrolase RutD family.

It catalyses the reaction carbamate + 2 H(+) = NH4(+) + CO2. Its function is as follows. Involved in pyrimidine catabolism. May facilitate the hydrolysis of carbamate, a reaction that can also occur spontaneously. The polypeptide is Putative carbamate hydrolase RutD (Klebsiella pneumoniae (strain 342)).